Reading from the N-terminus, the 475-residue chain is MNIGRAIKVTQAVVDIKFEGELPKIFNALKSKLKYKDKELVLEVSQHIGDNIVRCIAMDSTDGMSRGDEFVDTGAPISVPIGRSTLGRIFNVVGELIDECGPLKGKYNLEPIHRAPPSFTEQRIQEEVLVTGIKVIDLLAPYLKGGKIGLFGGAGVGKTVLIMELINNIAKAHKGFSVFAGVGERTREGNDLYHEMITSNVININEHEKSQAVLVYGQMNEPPGARARVALTALTMAEYFRDRENQDVLFFVDNIFRFTQAGSEISALLGRIPSAVGYQPTLATDMGAMQERIASTTSGSITSVQAIYVPADDLTDPAPATTFSHLDATTVLSRQIAEMGIYPAVDPLDSTSQSLSAEIIGEEHYNVASEVKRILQTYKSLQDIIAILGMDELSDEDKIIVDRARKIQKFLSQPFHVAEIFTGMPGKFVSLSDTVSSFKGIVEGKYDHLPEAAFYMVGNIDEAIKKAELIQAEAK.

Position 152-159 (152-159 (GGAGVGKT)) interacts with ATP.

It belongs to the ATPase alpha/beta chains family. As to quaternary structure, F-type ATPases have 2 components, CF(1) - the catalytic core - and CF(0) - the membrane proton channel. CF(1) has five subunits: alpha(3), beta(3), gamma(1), delta(1), epsilon(1). CF(0) has three main subunits: a(1), b(2) and c(9-12). The alpha and beta chains form an alternating ring which encloses part of the gamma chain. CF(1) is attached to CF(0) by a central stalk formed by the gamma and epsilon chains, while a peripheral stalk is formed by the delta and b chains.

Its subcellular location is the cell membrane. It carries out the reaction ATP + H2O + 4 H(+)(in) = ADP + phosphate + 5 H(+)(out). Its function is as follows. Produces ATP from ADP in the presence of a proton gradient across the membrane. The catalytic sites are hosted primarily by the beta subunits. This chain is ATP synthase subunit beta, found in Wolbachia pipientis wMel.